Here is a 78-residue protein sequence, read N- to C-terminus: MLVLLHAVFITVLTLLLLGRLQLLERLLLNHSFNLKTVADFNILYRSLAETRLLKVVLRLIFLVLLGFCCYRLLVILM.

A signal peptide spans 1 to 23; sequence MLVLLHAVFITVLTLLLLGRLQL. Over 24–57 the chain is Lumenal; the sequence is LERLLLNHSFNLKTVADFNILYRSLAETRLLKVV. Positions 54 to 65 are interaction with PPP1CC/PP1-gamma; the sequence is LKVVLRLIFLVL. The chain crosses the membrane as a helical span at residues 58–78; it reads LRLIFLVLLGFCCYRLLVILM.

It belongs to the coronaviruses ns7/ns7a protein family. In terms of assembly, interacts with serine/threonine-protein phosphatase PPP1CC/PP1-gamma; this interaction; this interaction probably promotes EIF2S1/eIF-2alpha dephosphorylation.

The protein resides in the host membrane. Functionally, inhibits the integrated stress response (ISR) in the infected cell by promoting EIF2S1/eIF-2alpha dephosphorylation. Acts as a functional homolog of host PPP1R15A/GADD34 to recruit PP1 phosphatase and dephosphorylate host EIF2S1/eIF-2alpha. May function in the formation of membrane-bound replication complexes or in the assembly of the virus. This chain is Non-structural protein 7, found in Sus scrofa (Pig).